Reading from the N-terminus, the 320-residue chain is Mas-related G-protein coupled receptor member D (320 aa).

Residues 1 to 33 lie on the Extracellular side of the membrane; it reads MNQTLNSSGTAELALNHSRGSVVHAACLVLSSL. N-linked (GlcNAc...) asparagine glycosylation is found at Asn-2, Asn-6, and Asn-16. A helical transmembrane segment spans residues 34 to 54; the sequence is AMFTCLCGMAGNSMVIWLLGF. Over 55–62 the chain is Cytoplasmic; sequence RMRRTPFS. The helical transmembrane segment at 63-83 threads the bilayer; sequence IYILNLAAADLLFVFCMAAML. The Extracellular portion of the chain corresponds to 84–112; sequence SLETQPLVSTTDKVHELMKRLKYFAYTVG. Residues 113–133 traverse the membrane as a helical segment; that stretch reads LSLLTAISTQRCLSVLFPIWF. Over 134 to 142 the chain is Cytoplasmic; sequence KCHRPRHLS. The helical transmembrane segment at 143-163 threads the bilayer; the sequence is AWVCALLWMLCLLTNGLTSCF. The Extracellular segment spans residues 164 to 182; that stretch reads CSKFLKFNKDQCFRVDMVQ. The helical transmembrane segment at 183–203 threads the bilayer; sequence AALIMGVLTPVMTLSSLTLFV. The Cytoplasmic segment spans residues 204-218; it reads RVRRSSQQWRRQPTR. Residues 219–239 form a helical membrane-spanning segment; sequence LFVVVLASVLVFLICSLPLGF. Residues 240–257 are Extracellular-facing; that stretch reads YWFVLYWLNLPPDTKVLY. A helical membrane pass occupies residues 258–280; that stretch reads FNLSRLSSSMSSSANPLIYFLVG. Topologically, residues 281–320 are cytoplasmic; it reads SRRSRRLQGSLGTVLQRALREEPELEGGETPTTGTNEMGA. The interval 301 to 320 is disordered; the sequence is EEPELEGGETPTTGTNEMGA. Low complexity predominate over residues 308-320; the sequence is GETPTTGTNEMGA.

It belongs to the G-protein coupled receptor 1 family. Mas subfamily. In terms of tissue distribution, co-expressed in the small diameter neurons with P2X3 and VR1 in dorsal root ganglia.

The protein resides in the cell membrane. In terms of biological role, may regulate nociceptor function and/or development, including the sensation or modulation of pain. Functions as a specific membrane receptor for beta-alanine. The receptor couples with G-protein G(q) and G(i). The polypeptide is Mas-related G-protein coupled receptor member D (MRGPRD) (Macaca fascicularis (Crab-eating macaque)).